Reading from the N-terminus, the 376-residue chain is Chaperone protein DnaJ (376 aa).

One can recognise a J domain in the interval 5–70 (DFYETLGVAK…QKRAAYDRYG (66 aa)). Residues 137-215 (GKTAQIRVPT…CHGQGRVTEE (79 aa)) form a CR-type zinc finger. 8 residues coordinate Zn(2+): Cys-150, Cys-153, Cys-167, Cys-170, Cys-189, Cys-192, Cys-203, and Cys-206. 4 CXXCXGXG motif repeats span residues 150–157 (CDVCSGSG), 167–174 (CGTCQGSG), 189–196 (CPTCHGRG), and 203–210 (CPKCHGQG).

This sequence belongs to the DnaJ family. In terms of assembly, homodimer. It depends on Zn(2+) as a cofactor.

It is found in the cytoplasm. Functionally, participates actively in the response to hyperosmotic and heat shock by preventing the aggregation of stress-denatured proteins and by disaggregating proteins, also in an autonomous, DnaK-independent fashion. Unfolded proteins bind initially to DnaJ; upon interaction with the DnaJ-bound protein, DnaK hydrolyzes its bound ATP, resulting in the formation of a stable complex. GrpE releases ADP from DnaK; ATP binding to DnaK triggers the release of the substrate protein, thus completing the reaction cycle. Several rounds of ATP-dependent interactions between DnaJ, DnaK and GrpE are required for fully efficient folding. Also involved, together with DnaK and GrpE, in the DNA replication of plasmids through activation of initiation proteins. The sequence is that of Chaperone protein DnaJ from Rhizobium leguminosarum bv. trifolii (strain WSM2304).